A 564-amino-acid chain; its full sequence is 5-hydroxytryptamine receptor 1 (564 aa).

A disordered region spans residues 1 to 26 (MALSGQDWRRHQSHRQHRNHRTQGNH). A compositionally biased stretch (basic residues) spans 11–23 (HQSHRQHRNHRTQ). A helical transmembrane segment spans residues 29-51 (LISTATLTLFVLFLSSWIAYAAG). Tandem repeats lie at residues 89-90 (GS), 91-92 (GS), 93-94 (GS), 95-96 (GS), 97-98 (GS), 99-100 (GS), 101-102 (GS), 103-104 (GS), and 105-106 (GS). Residues 89 to 106 (GSGSGSGSGSGSGSGSGS) are 9 X 2 AA tandem repeats of G-S. The helical transmembrane segment at 165–188 (VSIVLLIVILGTVVGNVLVCIAVC) threads the bilayer. The Cytoplasmic segment spans residues 189–198 (MVRKLRRPCN). A helical transmembrane segment spans residues 199–222 (YLLVSLALSDLCVALLVMPMALLY). The Extracellular segment spans residues 223-236 (EVLEKWNFGPLLCD). An intrachain disulfide couples Cys235 to Cys314. A helical membrane pass occupies residues 237-258 (IWVSFDVLCCTASILNLCAISV). Positions 238–247 (WVSFDVLCCT) are agonist binding. Ergotamine is bound by residues Asp242 and Thr247. Positions 259-261 (DRY) match the DRY motif; important for ligand-induced conformation changes motif. Residues 259–278 (DRYLAITKPLEYGVKRTPRR) lie on the Cytoplasmic side of the membrane. A helical membrane pass occupies residues 279–302 (MMLCVGIVWLAAACISLPPLLILG). The Extracellular portion of the chain corresponds to 303–330 (NEHEDEEGQPICTVCQNFAYQIYATLGS). The chain crosses the membrane as a helical span at residues 331–353 (FYIPLSVMLFVYYQIFRAARRIV). The Cytoplasmic segment spans residues 354–454 (LEEKRAQTHL…QLAKEKKAST (101 aa)). The disordered stretch occupies residues 367-396 (LNGTGSPSAPQAPPLGHTELASSGNGQRHS). Residues 386–396 (LASSGNGQRHS) show a composition bias toward polar residues. A helical transmembrane segment spans residues 455 to 476 (TLGIIMSAFTVCWLPFFILALI). Topologically, residues 477–487 (RPFETMHVPAS) are extracellular. A helical membrane pass occupies residues 488-510 (LSSLFLWLGYANSLLNPIIYATL). The short motif at 503–507 (NPIIY) is the NPxxY motif; important for ligand-induced conformation changes and signaling element. Residues 511–564 (NRDFRKPFQEILYFRCSSLNTMMRENYYQDQYGEPPSQRVMLGDERHGARESFL) lie on the Cytoplasmic side of the membrane.

The protein belongs to the G-protein coupled receptor 1 family. 5-hydroxytryptamine receptor subfamily. Expressed predominantly in adult heads.

It localises to the cell membrane. Its function is as follows. G-protein coupled receptor for 5-hydroxytryptamine (serotonin). Also functions as a receptor for various alkaloids. Ligand binding causes a conformation change that triggers signaling via guanine nucleotide-binding proteins (G proteins) and modulates the activity of down-stream effectors, such as adenylate cyclase. Signaling activates adenylate cyclase activity. The polypeptide is 5-hydroxytryptamine receptor 1 (5-HT7) (Drosophila melanogaster (Fruit fly)).